Here is an 892-residue protein sequence, read N- to C-terminus: Dystroglycan 1 (892 aa).

The first 27 residues, 1–27 (MRMSAGLSLLLPLWGRTFLLLLSVAMA), serve as a signal peptide directing secretion. The Extracellular portion of the chain corresponds to 28 to 750 (QSHWPSEAGR…SSEDDVYLHT (723 aa)). The segment at 30–405 (HWPSEAGRDW…GQIRPTMTIP (376 aa)) is required for laminin recognition. Residues 46-68 (SMHSVLSDLHEAVPTVVGIPDGI) are O-glycosylated at one site. N-linked (GlcNAc...) asparagine glycosylation occurs at Asn138. Cys179 and Cys261 are oxidised to a cystine. The interval 313-482 (ATPTPVTAIG…PPTRIRTTTS (170 aa)) is mucin-like domain. Thr314, Thr316, and Thr376 each carry an O-linked (Man6P...) threonine glycan. Positions 378–497 (TLGPIQPTRV…GEPNQRPELK (120 aa)) are disordered. Low complexity predominate over residues 410 to 444 (PTAVATPPTTTTKKPRVSTPKPATPSTDSSTTTTR). An O-glycosylated at seven sites with GalNAc region spans residues 460-482 (TTKAPITRLETASPPTRIRTTTS). The Peptidase S72 domain occupies 600 to 709 (RAPARFKAKF…SSIAVTGSGS (110 aa)). 3 N-linked (GlcNAc...) asparagine glycosylation sites follow: Asn638, Asn646, and Asn658. Cys666 and Cys710 are oxidised to a cystine. Positions 721 to 742 (PRRVPSEVPSTDVPDRDPEKSS) are disordered. The segment covering 733–742 (VPDRDPEKSS) has biased composition (basic and acidic residues). The chain crosses the membrane as a helical span at residues 751-771 (VIPAVVVAAILLIAGIIAMIC). At 772–892 (YRKKRKGKLT…YRSPPPYVPP (121 aa)) the chain is on the cytoplasmic side. Positions 773-779 (RKKRKGK) match the Nuclear localization signal motif. Thr787 bears the Phosphothreonine mark. The segment at 816–892 (LQEEKAPLPP…YRSPPPYVPP (77 aa)) is required for interaction with CAV3. Positions 820 to 892 (KAPLPPPEYP…YRSPPPYVPP (73 aa)) are disordered. Residues 829–843 (PNQSVPETTPLNQDT) are compositionally biased toward polar residues. The span at 856–867 (NAPPYQPPPPFT) shows a compositional bias: pro residues. Residues 877 to 892 (PKNMTPYRSPPPYVPP) are required for binding DMD and UTRN. A PPXY motif motif is present at residues 886 to 889 (PPPY). Phosphotyrosine; by SRC is present on Tyr889.

As to quaternary structure, monomer. Heterodimer of alpha- and beta-dystroglycan subunits which are the central components of the dystrophin-glycoprotein complex. This complex then can form a dystrophin-associated glycoprotein complex (DGC) which is composed of three subcomplexes: a cytoplasmic complex comprised of DMD (or UTRN), DTNA and a number of syntrophins, such as SNTB1, SNTB2, SNTG1 and SNTG2, the transmembrane dystroglycan complex, and the sarcoglycan-sarcospan complex. Interacts (via the N-terminal of alphaDAG1) with LARGE1; the interaction enhances laminin binding. Interacts with SGCD. Interacts with AGR2 and AGR3. Interacts (betaDAG1) with DMD; the interaction is inhibited by phosphorylation on the PPXY motif. Interacts (betaDAG1, via its PPXY motif) with UTRN (via its WWW and ZZ domains); the interaction is inhibited by phosphorylation on the PPXY motif. Interacts (betaDAG1, via its phosphorylated PPXY motif) with the SH2 domain-containing proteins, FYN, CSK, NCK and SHC. Interacts (betaDAG1) with CAV3 (via a central WW-like domain); the interaction disrupts the binding of DMD. BetaDAG1 directly interacts with ANK3, but not with ANK2; this interaction does not interfere with DMD-binding and is required for retention at costameres. Identified in a dystroglycan complex that contains at least PRX, DRP2, UTRN, DMD and DAG1. Interacts with POMGNT1. BetaDAG1 interacts with CD93. Post-translationally, O-glycosylated. POMGNT1 catalyzes the initial addition of N-acetylglucosamine, giving rise to the GlcNAc(beta1-2)Man(alpha1-)O-Ser/Thr moiety and thus providing the necessary basis for the addition of further carbohydrate moieties. Heavily O-glycosylated comprising of up to two thirds of its mass and the carbohydrate composition differs depending on tissue type. Mucin-type O-glycosylation is important for ligand binding activity. O-mannosylation is found in high abundance in both brain and muscle where the most abundant glycan is Sia-alpha-2-3-Gal-beta-1-4-Glc-NAc-beta-1-2-Man. In muscle, glycosylation on Thr-314, Thr-316 and Thr-376 by a phosphorylated O-mannosyl glycan with the structure 2-(N-acetylamido)-2-deoxygalactosyl-beta-1,3-2-(N-acetylamido)-2-deoxyglucosyl-beta-1,4-6-phosphomannose is mediated by like-acetylglucosaminyltransferase (LARGE1) protein amd is required for laminin binding. O-glycosylated in the N-terminal region with a core 1 or possibly core 8 glycan. The brain form displays a unique glycosylation pattern which is absent in other tissues; this form shows enhanced binding to laminin LAMA5 compared to the skeletal muscle form. N-glycosylated. In terms of processing, autolytic cleavage produces the alpha and beta subunits. In cutaneous cells, as well as in certain pathological conditions, shedding of beta-dystroglycan can occur releasing a peptide of about 30 kDa. Post-translationally, SRC-mediated phosphorylation of the PPXY motif of the beta subunit recruits SH2 domain-containing proteins, but inhibits binding to WWW domain-containing proteins, DMD and UTRN. This phosphorylation also inhibits nuclear entry.

The protein localises to the secreted. Its subcellular location is the extracellular space. It is found in the cell membrane. It localises to the cytoplasm. The protein resides in the cytoskeleton. The protein localises to the nucleus. Its subcellular location is the nucleoplasm. It is found in the sarcolemma. It localises to the postsynaptic cell membrane. Its function is as follows. The dystroglycan complex is involved in a number of processes including laminin and basement membrane assembly, sarcolemmal stability, cell survival, peripheral nerve myelination, nodal structure, cell migration, and epithelial polarization. Functionally, extracellular peripheral glycoprotein that acts as a receptor for extracellular matrix proteins containing laminin-G domains. Receptor for laminin-2 (LAMA2) and agrin in peripheral nerve Schwann cells. Also acts as a receptor for laminin LAMA5. Transmembrane protein that plays important roles in connecting the extracellular matrix to the cytoskeleton. Acts as a cell adhesion receptor in both muscle and non-muscle tissues. Receptor for both DMD and UTRN and, through these interactions, scaffolds axin to the cytoskeleton. Also functions in cell adhesion-mediated signaling and implicated in cell polarity. In Canis lupus familiaris (Dog), this protein is Dystroglycan 1.